A 1010-amino-acid chain; its full sequence is 2-oxoglutarate dehydrogenase-like, mitochondrial (1010 aa).

The N-terminal 73 residues, 1–73 (MSQLRLLPSR…RSVHKSWDSF (73 aa)), are a transit peptide targeting the mitochondrion. Ca(2+) contacts are provided by histidine 130, aspartate 143, and aspartate 145. Positions 299, 398, 431, 433, and 663 each coordinate thiamine diphosphate. Mg(2+)-binding residues include aspartate 398, asparagine 431, and isoleucine 433.

This sequence belongs to the alpha-ketoglutarate dehydrogenase family. The OGDHC complex comprises multiple copies of three catalytic enzyme components, the 2-oxoglutarate dehydrogenase (OGDH/E1), the dihydrolipoamide dehydrogenase (DLST/E2) and the dihydrolipoamide dehydrogenase (DLD/E3). OGDHL/E1-like isoenzyme may replace OGDH in the OGDHC complex in the brain. The presence of either ODGH/E1 or ODGHL/E1-like isoenzyme in the complex may depend on its tissular distribution. The cofactor is thiamine diphosphate. Mg(2+) is required as a cofactor.

The protein localises to the mitochondrion matrix. It catalyses the reaction N(6)-[(R)-lipoyl]-L-lysyl-[protein] + 2-oxoglutarate + H(+) = N(6)-[(R)-S(8)-succinyldihydrolipoyl]-L-lysyl-[protein] + CO2. In terms of biological role, 2-oxoglutarate dehydrogenase (E1-like) component of the 2-oxoglutarate dehydrogenase multienzyme complex (OGDHC) which mediates the decarboxylation of alpha-ketoglutarate in the tricarboxylic acid cycle. The OGDHC complex catalyzes the overall conversion of 2-oxoglutarate to succinyl-CoA and CO(2) while reducing NAD(+) to NADH. The OGDHC complex is mainly active in the mitochondrion. Involved in the inhibition of cell proliferation and in apoptosis. This chain is 2-oxoglutarate dehydrogenase-like, mitochondrial (OGDHL), found in Pongo abelii (Sumatran orangutan).